Reading from the N-terminus, the 380-residue chain is Cytochrome b (380 aa).

4 consecutive transmembrane segments (helical) span residues 34–54 (SGSL…FLAM), 78–99 (WFLR…YCHI), 114–134 (WNVG…GYVL), and 179–199 (FFPF…IHLV). Residues His-84 and His-98 each contribute to the heme b site. Positions 183 and 197 each coordinate heme b. His-202 serves as a coordination point for a ubiquinone. Helical transmembrane passes span 227-247 (TKDT…ALLF), 289-309 (LGGV…PLLN), 321-341 (LSQA…WIGS), and 348-369 (YVLL…GFPI).

Belongs to the cytochrome b family. The main subunits of complex b-c1 are: cytochrome b, cytochrome c1 and the Rieske protein. Heme b is required as a cofactor.

The protein localises to the mitochondrion inner membrane. Component of the ubiquinol-cytochrome c reductase complex (complex III or cytochrome b-c1 complex) that is part of the mitochondrial respiratory chain. The b-c1 complex mediates electron transfer from ubiquinol to cytochrome c. Contributes to the generation of a proton gradient across the mitochondrial membrane that is then used for ATP synthesis. The chain is Cytochrome b (MT-CYB) from Strongylocentrotus purpuratus (Purple sea urchin).